A 513-amino-acid polypeptide reads, in one-letter code: ATP synthase subunit alpha (513 aa).

ATP is bound at residue 169 to 176 (GDRQTGKT).

It belongs to the ATPase alpha/beta chains family. In terms of assembly, F-type ATPases have 2 components, CF(1) - the catalytic core - and CF(0) - the membrane proton channel. CF(1) has five subunits: alpha(3), beta(3), gamma(1), delta(1), epsilon(1). CF(0) has three main subunits: a(1), b(2) and c(9-12). The alpha and beta chains form an alternating ring which encloses part of the gamma chain. CF(1) is attached to CF(0) by a central stalk formed by the gamma and epsilon chains, while a peripheral stalk is formed by the delta and b chains.

The protein localises to the cell inner membrane. It carries out the reaction ATP + H2O + 4 H(+)(in) = ADP + phosphate + 5 H(+)(out). Its function is as follows. Produces ATP from ADP in the presence of a proton gradient across the membrane. The alpha chain is a regulatory subunit. In Salmonella arizonae (strain ATCC BAA-731 / CDC346-86 / RSK2980), this protein is ATP synthase subunit alpha.